The chain runs to 226 residues: Thymocyte nuclear protein 1 (226 aa).

Positions 1-38 (MPRPRKRQAGAAGPDKKQLSGKRTKTENSESASVKLEN) are disordered. The short motif at 5–10 (RKRQAG) is the Nuclear localization signal element. Positions 14 to 28 (PDKKQLSGKRTKTEN) are enriched in basic and acidic residues. Residues 29–38 (SESASVKLEN) are compositionally biased toward polar residues.

Phosphorylated.

The protein resides in the nucleus. Its function is as follows. Specifically binds 5-hydroxymethylcytosine (5hmC), suggesting that it acts as a specific reader of 5hmC. This Rattus norvegicus (Rat) protein is Thymocyte nuclear protein 1 (Thyn1).